The primary structure comprises 303 residues: Lysosomal amino acid transporter 1 homolog (303 aa).

The Lumenal segment spans residues 1 to 38 (MAEGLRAPPPPGNGSECPDGARWVLRLLGECARDGRDV). Asn-13 carries N-linked (GlcNAc...) asparagine glycosylation. Residues 36-102 (RDVGSALLGL…LANQLPLQVY (67 aa)) enclose the PQ-loop 1 domain. A helical transmembrane segment spans residues 39–59 (GSALLGLLSIGCFAAAALPQF). The Cytoplasmic segment spans residues 60–73 (YQACKTGIMDRALS). Residues 74-94 (IYFLLGWLGGDLLNLIGSFLA) form a helical membrane-spanning segment. The Lumenal portion of the chain corresponds to 95–96 (NQ). Residues 97–117 (LPLQVYTAVYYVLADLVMLSL) traverse the membrane as a helical segment. Residues 118 to 131 (YGYYKAKNWGTGAT) are Cytoplasmic-facing. A helical transmembrane segment spans residues 132 to 152 (ASINAACLFCLLGTATTLTVL). Residues 153–182 (SHDTGPAPNPAAFGGRSLLSLGLEGPGPEP) lie on the Lumenal side of the membrane. Residues 183-203 (ISKTEIIGFAIGSISSVLYLC) traverse the membrane as a helical segment. Residues 186–251 (TEIIGFAIGS…LKNPEPGQSE (66 aa)) form the PQ-loop 2 domain. The Cytoplasmic portion of the chain corresponds to 204–220 (SRLPQIYTNYRRKSTAG). A helical transmembrane segment spans residues 221-241 (VSFLLFALVMLGNLLYGTSVL). Residues 242–260 (LKNPEPGQSEGDYILHHLP) are Lumenal-facing. A helical membrane pass occupies residues 261 to 281 (WLIGSLGVLSLDVIISFQFLA). Residues 282–303 (YRTGQPSAGEEREALLAEHGDS) are Cytoplasmic-facing. A Di-leucine motif motif is present at residues 296 to 297 (LL).

This sequence belongs to the laat-1 family.

The protein localises to the lysosome membrane. Amino acid transporter that specifically mediates the pH-dependent export of the cationic amino acids arginine, histidine and lysine from lysosomes. This Gallus gallus (Chicken) protein is Lysosomal amino acid transporter 1 homolog (SLC66A1).